Here is a 294-residue protein sequence, read N- to C-terminus: Diphthine synthase (294 aa).

S-adenosyl-L-methionine contacts are provided by residues D93, V96, 121–122 (SG), L173, and A220.

It belongs to the diphthine synthase family. Homodimer.

It carries out the reaction 2-[(3S)-amino-3-carboxypropyl]-L-histidyl-[translation elongation factor 2] + 3 S-adenosyl-L-methionine = diphthine-[translation elongation factor 2] + 3 S-adenosyl-L-homocysteine + 3 H(+). Its pathway is protein modification; peptidyl-diphthamide biosynthesis. In terms of biological role, S-adenosyl-L-methionine-dependent methyltransferase that catalyzes the trimethylation of the amino group of the modified target histidine residue in translation elongation factor 2 (EF-2), to form an intermediate called diphthine. The three successive methylation reactions represent the second step of diphthamide biosynthesis. The sequence is that of Diphthine synthase (dphB) from Aeropyrum pernix (strain ATCC 700893 / DSM 11879 / JCM 9820 / NBRC 100138 / K1).